We begin with the raw amino-acid sequence, 638 residues long: Bromodomain-containing factor 2 (638 aa).

Residues 1-10 are compositionally biased toward basic and acidic residues; the sequence is MSRTNMDTRH. The segment at 1–54 is disordered; the sequence is MSRTNMDTRHAHSALLAAPQSATANSRSSNSSSESSSNKNNINVGVGDDSGNVS. The segment covering 25–43 has biased composition (low complexity); that stretch reads NSRSSNSSSESSSNKNNIN. A Bromo 1 domain is found at 130–239; it reads EAEELPPHQS…KYFEKKLSAM (110 aa). A disordered region spans residues 250–306; sequence KKTSRNRKKNEDMDSPLVIRRSVSTTNDNIGESGNREGVSGGRPKRTIHPPKSKDLF. Phosphoserine is present on S264. A compositionally biased stretch (polar residues) spans 271–281; sequence SVSTTNDNIGE. The region spanning 317 to 426 is the Bromo 2 domain; the sequence is KTLQKKFRTC…ELFNFHWLEN (110 aa). Positions 435–460 are disordered; that stretch reads TDSDLEEDNYSSSYSSDDEYDDEDIN. Acidic residues predominate over residues 450 to 460; sequence SDDEYDDEDIN. Residues 468–537 are a coiled coil; that stretch reads AIQYLEQKLK…INELSDLEMN (70 aa). Residues 506 to 590 enclose the NET domain; it reads TLLRRKAMKH…EKKNNNNSKR (85 aa). Positions 586-638 are disordered; that stretch reads NNSKRKLSGNYSTAPTNKKKKTLKFLEKDEIINNNNYSDSEEDSSDSSDSDSD. Residues 624–638 show a composition bias toward acidic residues; the sequence is DSEEDSSDSSDSDSD.

Belongs to the BET family. As to quaternary structure, interacts with the TFIID subunit TAF7 and with histone H4. In terms of processing, phosphorylated by the casein kinase CK2 complex.

It is found in the cytoplasm. The protein resides in the nucleus. In terms of biological role, transcription factor involved in the expression of a broad class of genes including snRNAs. Required for sporulation and DNA-damage repair. Prevents the spreading of SIR silencing at telomeres and protects histone H4, but not H3, from deacetylation. This is Bromodomain-containing factor 2 (BDF2) from Saccharomyces cerevisiae (strain ATCC 204508 / S288c) (Baker's yeast).